The primary structure comprises 311 residues: tRNA-cytidine(32) 2-sulfurtransferase (311 aa).

The short motif at 47–52 (SGGKDS) is the PP-loop motif element. [4Fe-4S] cluster is bound by residues C122, C125, and C213.

Belongs to the TtcA family. Homodimer. It depends on Mg(2+) as a cofactor. Requires [4Fe-4S] cluster as cofactor.

Its subcellular location is the cytoplasm. The enzyme catalyses cytidine(32) in tRNA + S-sulfanyl-L-cysteinyl-[cysteine desulfurase] + AH2 + ATP = 2-thiocytidine(32) in tRNA + L-cysteinyl-[cysteine desulfurase] + A + AMP + diphosphate + H(+). It participates in tRNA modification. Functionally, catalyzes the ATP-dependent 2-thiolation of cytidine in position 32 of tRNA, to form 2-thiocytidine (s(2)C32). The sulfur atoms are provided by the cysteine/cysteine desulfurase (IscS) system. This Salmonella dublin (strain CT_02021853) protein is tRNA-cytidine(32) 2-sulfurtransferase.